We begin with the raw amino-acid sequence, 637 residues long: MMFWRKLPKALFIGLTLAIAVNLLLVFSSKGTLQNLFTGGLHRELPLHLNKRYGAVIKRLSHLEVELQDLKESMKLALRQQENVNSTLKRAKDEVRPLLKAMETKVNETKKHKTQMKLFPHSQLFRQWGEDLSEAQQKAAQDLFRKFGYNAYLSNQLPLNRTIPDTRDYRCLRKTYPSQLPSLSVILIFVNEALSIIQRAITSIINRTPSRLLKEIILVDDFSSNGELKVHLDEKIKLYNQKYPGLLKIIRHPERKGLAQARNTGWEAATADVVAILDAHIEVNVGWAEPILARIQEDRTVIVSPVFDNIRFDTFKLDKYELAVDGFNWELWCRYDALPQAWIDLHDVTAPVKSPSIMGILAANRHFLGEIGSLDGGMLIYGGENVELSLRVWQCGGKVEILPCSRIAHLERHHKPYALDLTAALKRNALRVAEIWMDEHKHMVYLAWNIPLQNSGIDFGDVSSRMALREKLKCKTFDWYLKNVYPLLKPLHTIVGYGRMKNLLDENVCLDQGPVPGNTPIMYYCHEFSSQNVYYHLTGELYVGQLIAEASASDRCLTDPGKAEKPTLEPCSKAAKNRLHIYWDFKPGGAVINRDTKRCLEMKKDLLGSHVLVLQTCSTQVWEIQHTVRDWGQTNSQ.

Topologically, residues 1-6 (MMFWRK) are cytoplasmic. Residues 7–29 (LPKALFIGLTLAIAVNLLLVFSS) form a helical; Signal-anchor for type II membrane protein membrane-spanning segment. Topologically, residues 30-637 (KGTLQNLFTG…VRDWGQTNSQ (608 aa)) are lumenal. N-linked (GlcNAc...) asparagine glycosylation is found at Asn-85, Asn-107, and Asn-160. Cystine bridges form between Cys-171/Cys-404, Cys-395/Cys-474, Cys-509/Cys-525, Cys-556/Cys-571, and Cys-599/Cys-617. The catalytic subdomain A stretch occupies residues 180 to 294 (LPSLSVILIF…VGWAEPILAR (115 aa)). Substrate is bound by residues Asp-221 and Arg-255. Mn(2+) contacts are provided by Asp-278, His-280, and His-409. Positions 351–412 (PVKSPSIMGI…PCSRIAHLER (62 aa)) are catalytic subdomain B. Substrate contacts are provided by Arg-412 and Tyr-417. The 139-residue stretch at 496-634 (GYGRMKNLLD…QHTVRDWGQT (139 aa)) folds into the Ricin B-type lectin domain.

It belongs to the glycosyltransferase 2 family. GalNAc-T subfamily. The cofactor is Mn(2+). As to expression, widely expressed. Expressed in heart, skeletal muscle, kidney, liver, small intestine and placenta. Weakly expressed in colon, thymus, spleen, lung and leukocyte.

The protein localises to the golgi apparatus membrane. It catalyses the reaction L-seryl-[protein] + UDP-N-acetyl-alpha-D-galactosamine = a 3-O-[N-acetyl-alpha-D-galactosaminyl]-L-seryl-[protein] + UDP + H(+). It carries out the reaction L-threonyl-[protein] + UDP-N-acetyl-alpha-D-galactosamine = a 3-O-[N-acetyl-alpha-D-galactosaminyl]-L-threonyl-[protein] + UDP + H(+). The protein operates within protein modification; protein glycosylation. Its function is as follows. Probably catalyzes the initial reaction in O-linked oligosaccharide biosynthesis, the transfer of an N-acetyl-D-galactosamine residue to a serine or threonine residue on the protein receptor. This chain is Probable polypeptide N-acetylgalactosaminyltransferase 8 (GALNT8), found in Homo sapiens (Human).